The chain runs to 1600 residues: Eukaryotic translation initiation factor 4 gamma 1 (1600 aa).

The tract at residues 1–88 (MNKAPQPTGP…ARPGPAPHVY (88 aa)) is disordered. Positions 7 to 24 (PTGPPPARSPGLPQPAFP) are enriched in pro residues. Phosphoserine is present on serine 15. The segment covering 34-48 (STPQATQMNTPSQPR) has biased composition (polar residues). The span at 60-79 (PSRAQPPSSAASRVQSAAPA) shows a compositional bias: low complexity. Omega-N-methylarginine occurs at positions 80 and 117. Disordered stretches follow at residues 173–230 (NQPP…NGES), 243–326 (SQGA…LSPE), 366–501 (ETHE…QLSQ), 507–526 (AATQ…KELN), and 541–606 (VDPA…DQWK). A PABPC1-binding region spans residues 179 to 207 (APKRERKTIRIRDPNQGGKDITEEIMSGA). Over residues 208–220 (RTASTPTPPQTGG) the composition is skewed to polar residues. At threonine 214 the chain carries Phosphothreonine. Serine 230 is modified (phosphoserine). Positions 269–280 (SPSPTPSPPPIL) are enriched in pro residues. Serine 324 carries the post-translational modification Phosphoserine. Residues 438-449 (KVSSAALASILS) show a composition bias toward low complexity. The span at 463–479 (QEEEMEEDDDDEEGGEA) shows a compositional bias: acidic residues. Residues 551–562 (QPPTGSNPSPES) show a composition bias toward polar residues. 2 stretches are compositionally biased toward basic and acidic residues: residues 578-587 (WDSKEDKIHN) and 596-606 (QKYEYKSDQWK). An N6-acetyllysine modification is found at lysine 606. Residues 611-622 (EEKKRYDREFLL) are EIF4E-binding. At threonine 651 the chain carries Phosphothreonine. Disordered stretches follow at residues 667-719 (GPDF…TRKI) and 734-760 (AEKA…DGSK). The eIF3/EIF4A-binding stretch occupies residues 686–1089 (GPPRGGPGGE…GSIDSNNQLF (404 aa)). Omega-N-methylarginine is present on residues arginine 689 and arginine 698. Positions 697 to 707 (PRGPAGLGPRR) are enriched in low complexity. Residues 745 to 760 (TAADKDRGEEDADGSK) show a composition bias toward basic and acidic residues. Residues 765 to 993 (FRRVRSILNK…QDVLDLRQSN (229 aa)) form the MIF4G domain. Disordered regions lie at residues 1029–1117 (AKGS…SEAT) and 1129–1238 (QQTL…AALS). Serine 1032 is subject to Phosphoserine. Residues arginine 1036 and arginine 1046 each carry the omega-N-methylarginine modification. Phosphoserine is present on residues serine 1081 and serine 1096. The residue at position 1099 (lysine 1099) is an N6-acetyllysine. 2 positions are modified to phosphoserine: serine 1147 and serine 1149. The span at 1148 to 1180 (LSRERGEKAGDRGDRLERSERGGDRGDRLDRAR) shows a compositional bias: basic and acidic residues. Serine 1187 bears the Phosphoserine; by PKC/PRKCA mark. The segment covering 1188 to 1225 (FSKEVEERSRERPSQPEGLRKAASLTEDRGRDPVKREA) has biased composition (basic and acidic residues). Phosphoserine is present on residues serine 1189, serine 1196, and serine 1211. The residue at position 1213 (threonine 1213) is a Phosphothreonine. Phosphoserine is present on residues serine 1231 and serine 1238. Residues 1241-1363 (EVEKKSKAII…PMGELFREIT (123 aa)) form the MI domain. Positions 1429–1599 (ESEAPGQRTL…REAEDEESDH (171 aa)) constitute a W2 domain. The segment at 1450 to 1600 (LLKDGGSNQR…EAEDEESDHN (151 aa)) is EIF4A-binding. Residues 1585–1600 (FFNWLREAEDEESDHN) are necessary but not sufficient for MKNK1-binding. Serine 1597 bears the Phosphoserine mark.

This sequence belongs to the eukaryotic initiation factor 4G family. In terms of assembly, eIF4F is a multi-subunit complex, the composition of which varies with external and internal environmental conditions. It is composed of at least EIF4A, EIF4E (cap-binding) and EIF4G1/EIF4G3. Interacts with eIF3 complex, mutually exclusive with EIF4A1 or EIF4A2, EIF4E and through its N-terminus with PABPC1. Interacts with EIF4E or with EIF1 (mutually exclusive) through a common binding site. Interacts through its C-terminus with the serine/threonine kinases MKNK1, and with MKNK2. Appears to act as a scaffold protein, holding these enzymes in place to phosphorylate EIF4E. Non-phosphorylated EIF4EBP1 competes with EIF4G1/EIF4G3 to interact with EIF4E; insulin stimulated MAP-kinase (MAPK1 and MAPK3) phosphorylation of EIF4EBP1 causes dissociation of the complex allowing EIF4G1/EIF4G3 to bind and consequent initiation of translation. EIF4G1/EIF4G3 interacts with PABPC1 to bring about circularization of the mRNA. Interacts with EIF4E3. Interacts with CIRBP and MIF4GD. Interacts with RBM4. Interacts with HNRNPD/AUF1; the interaction requires RNA. Interacts with DDX3X; the interaction requires RNA. Interacts with DAZAP2. As to quaternary structure, (Microbial infection) Interacts with murine norovirus viral genome-linked protein (via C-terminus); this interaction plays a role in translation of viral proteins. Post-translationally, phosphorylated at multiple sites in vivo. Phosphorylation at Ser-1187 by PRKCA induces binding to MKNK1.

It localises to the cytoplasm. The protein localises to the nucleus. The protein resides in the stress granule. In terms of biological role, component of the protein complex eIF4F, which is involved in the recognition of the mRNA cap, ATP-dependent unwinding of 5'-terminal secondary structure and recruitment of mRNA to the ribosome. Exists in two complexes, either with EIF1 or with EIF4E (mutually exclusive). Together with EIF1, is required for leaky scanning, in particular for avoiding cap-proximal start codon. Together with EIF4E, antagonizes the scanning promoted by EIF1-EIF4G1 and locates the start codon (through a TISU element) without scanning. As a member of the eIF4F complex, required for endoplasmic reticulum stress-induced ATF4 mRNA translation. The sequence is that of Eukaryotic translation initiation factor 4 gamma 1 (Eif4g1) from Mus musculus (Mouse).